Here is a 277-residue protein sequence, read N- to C-terminus: Indole-3-glycerol phosphate synthase (277 aa).

This sequence belongs to the TrpC family.

The enzyme catalyses 1-(2-carboxyphenylamino)-1-deoxy-D-ribulose 5-phosphate + H(+) = (1S,2R)-1-C-(indol-3-yl)glycerol 3-phosphate + CO2 + H2O. It participates in amino-acid biosynthesis; L-tryptophan biosynthesis; L-tryptophan from chorismate: step 4/5. This is Indole-3-glycerol phosphate synthase from Pseudomonas putida (strain ATCC 700007 / DSM 6899 / JCM 31910 / BCRC 17059 / LMG 24140 / F1).